We begin with the raw amino-acid sequence, 87 residues long: HssA/B-like protein 18 (87 aa).

It belongs to the hssA/B family.

The sequence is that of HssA/B-like protein 18 (hssl18) from Dictyostelium discoideum (Social amoeba).